A 295-amino-acid chain; its full sequence is Tyrosine recombinase XerC (295 aa).

Residues 1–84 (MTLEEQFLSY…SLKSFYRLLT (84 aa)) enclose the Core-binding (CB) domain. Positions 105–289 (KLPEFFYQDE…SMQHLTAEYR (185 aa)) constitute a Tyr recombinase domain. Residues arginine 145, lysine 169, histidine 241, arginine 244, and histidine 267 contribute to the active site. The active-site O-(3'-phospho-DNA)-tyrosine intermediate is tyrosine 276.

This sequence belongs to the 'phage' integrase family. XerC subfamily. In terms of assembly, forms a cyclic heterotetrameric complex composed of two molecules of XerC and two molecules of XerD.

The protein localises to the cytoplasm. Its function is as follows. Site-specific tyrosine recombinase, which acts by catalyzing the cutting and rejoining of the recombining DNA molecules. The XerC-XerD complex is essential to convert dimers of the bacterial chromosome into monomers to permit their segregation at cell division. It also contributes to the segregational stability of plasmids. The sequence is that of Tyrosine recombinase XerC from Lactobacillus leichmannii.